Reading from the N-terminus, the 1482-residue chain is Cystic fibrosis transmembrane conductance regulator (1482 aa).

The Cytoplasmic portion of the chain corresponds to 1–77 (MQRSPLEKAS…KLINALRRCF (77 aa)). Residues 78–98 (FWRFMFYGIILYLGEVTKAVQ) form a helical membrane-spanning segment. Residues 81–365 (FMFYGIILYL…WAVQTWYDSL (285 aa)) enclose the ABC transmembrane type-1 1 domain. Residues 99–122 (PLLLGRIIASYDPDNKAERSIAIY) are Extracellular-facing. Residues 123 to 146 (LGVGLCLLFIVRTLLLHPAIFGPH) form a helical membrane-spanning segment. Residues 147–195 (HIGMQMRIAMFSLIYKKTLKLSSRVLDKISIGQLVSLLSNNLNKFDEGL) lie on the Cytoplasmic side of the membrane. A helical membrane pass occupies residues 196 to 216 (ALAHFVWIAPLQVTLLMGLLW). Topologically, residues 217–222 (ELLQAS) are extracellular. The helical transmembrane segment at 223-243 (AFCGLAFLVVLALFQAGLGKM) threads the bilayer. At 244–298 (MMKYRDQRAGKINERLVITSEMIENIQSVKAYCWEEAMEKMIENLRQTELKLTRK) the chain is on the cytoplasmic side. The chain crosses the membrane as a helical span at residues 299-319 (AAYVRYFNSSAFFFSGLFVVF). The Extracellular portion of the chain corresponds to 320–339 (LSVLPYALLKGIMLRKIFTT). Residues 340-358 (ISFCIVLRMAVTRQFPWAV) form a helical membrane-spanning segment. At 359 to 859 (QTWYDSLGAI…YLRYVTVHKS (501 aa)) the chain is on the cytoplasmic side. Residues Trp401, Ser434, 458–465 (GSTGAGKT), and Gln493 contribute to the ATP site. Residues 423-646 (NGDNSLFFSN…RPDFSSKLMG (224 aa)) form the ABC transporter 1 domain. Cys524 is lipidated: S-palmitoyl cysteine. A phosphoserine mark is found at Ser549 and Ser660. Positions 654 to 832 (TAERRNSIIT…EEINEEDLRE (179 aa)) are disordered R region. Phosphoserine; by PKA is present on Ser670. Residue Ser686 is modified to Phosphoserine. Lys688 participates in a covalent cross-link: Glycyl lysine isopeptide (Lys-Gly) (interchain with G-Cter in ubiquitin). A phosphoserine mark is found at Ser700 and Ser712. Phosphothreonine is present on Thr717. Residues Ser737, Ser768, Ser791, Ser796, and Ser814 each carry the phosphoserine modification. A helical transmembrane segment spans residues 860-880 (LIFVLIWCLVVFLAEVAACLV). One can recognise an ABC transmembrane type-1 2 domain in the interval 860–1156 (LIFVLIWCLV…AVNSSIDVDS (297 aa)). At 881 to 919 (VLCLLKKTSPQDKGNSTKGANNSYAVIITSTSAYYVFYI) the chain is on the extracellular side. Asn895 and Asn901 each carry an N-linked (GlcNAc...) asparagine glycan. Residues 920–940 (YVGVADGLLALGLFRGLPLVH) form a discontinuously helical membrane-spanning segment. At 941 to 991 (TLITVSKILHRKMLHSVLQAPMSTLNTLKAGGILNRFSKDIAVLDDLLPLT) the chain is on the cytoplasmic side. The chain crosses the membrane as a helical span at residues 992–1012 (IFDFIQLLLIVIGAVAVVSVL). Topologically, residues 1013-1014 (KP) are extracellular. The chain crosses the membrane as a helical span at residues 1015 to 1035 (YIFLATVPVIVAFILLRAYFL). Over 1036-1096 (HTSQQLKQLE…TANWFLYLST (61 aa)) the chain is Cytoplasmic. Residues 1097–1117 (LRWFQMRIEMIFVIFFIAVTF) form a helical membrane-spanning segment. Topologically, residues 1118–1131 (ISILTTGEGEGTVG) are extracellular. Residues 1132 to 1152 (IILTLAMNIMSTLQWAVNSSI) form a helical membrane-spanning segment. Residues 1153–1482 (DVDSLMRSVS…TEEEVQETRL (330 aa)) lie on the Cytoplasmic side of the membrane. The 234-residue stretch at 1212–1445 (MTVKDLTAKY…KSLFRQAISP (234 aa)) folds into the ABC transporter 2 domain. ATP is bound by residues Tyr1221 and 1246–1253 (GRTGSGKS). Residues 1388-1482 (RTLKQAFADC…TEEEVQETRL (95 aa)) form an interaction with GORASP2 region. Cys1397 is lipidated: S-palmitoyl cysteine. The span at 1454 to 1464 (HRNSSKQRSRS) shows a compositional bias: basic residues. The disordered stretch occupies residues 1454-1482 (HRNSSKQRSRSKIAALKEETEEEVQETRL). Ser1458 is subject to Phosphoserine. Positions 1472–1482 (ETEEEVQETRL) are enriched in acidic residues. The short motif at 1480-1482 (TRL) is the PDZ-binding element.

Belongs to the ABC transporter superfamily. ABCC family. CFTR transporter (TC 3.A.1.202) subfamily. Monomer; does not require oligomerization for channel activity. May form oligomers in the membrane. Interacts with SLC26A3, SLC26A6 and NHERF1. Interacts with SHANK2. Interacts with MYO6. Interacts (via C-terminus) with GOPC (via PDZ domain); this promotes CFTR internalization and thereby decreases channel activity. Interacts with SLC4A7 through NHERF1. Found in a complex with MYO5B and RAB11A. Interacts with ANO1. Interacts with SLC26A8. Interacts with AHCYL1; the interaction increases CFTR activity. Interacts with CSE1L. The core-glycosylated form interacts with GORASP2 (via PDZ GRASP-type 1 domain) in respone to ER stress. Interacts with MARCHF2; the interaction leads to CFTR ubiqtuitination and degradation. Interacts with ADGRG2. Post-translationally, N-glycosylated. In terms of processing, phosphorylated; cAMP treatment promotes phosphorylation and activates the channel. Dephosphorylation decreases the ATPase activity (in vitro). Phosphorylation at PKA sites activates the channel. Phosphorylation at PKC sites enhances the response to phosphorylation by PKA. Phosphorylated by AMPK; this inhibits channel activity. Ubiquitinated, leading to its degradation in the lysosome. Deubiquitination by USP10 in early endosomes enhances its endocytic recycling to the cell membrane. Ubiquitinated by RNF185 during ER stress. Ubiquitinated by MARCHF2.

It is found in the apical cell membrane. It localises to the early endosome membrane. The protein localises to the cell membrane. The protein resides in the recycling endosome membrane. Its subcellular location is the endoplasmic reticulum membrane. It is found in the nucleus. The catalysed reaction is ATP + H2O + closed Cl(-) channel = ADP + phosphate + open Cl(-) channel.. It catalyses the reaction chloride(in) = chloride(out). The enzyme catalyses hydrogencarbonate(in) = hydrogencarbonate(out). It carries out the reaction ATP + H2O = ADP + phosphate + H(+). Its function is as follows. Epithelial ion channel that plays an important role in the regulation of epithelial ion and water transport and fluid homeostasis. Mediates the transport of chloride ions across the cell membrane. Possesses an intrinsic ATPase activity and utilizes ATP to gate its channel; the passive flow of anions through the channel is gated by cycles of ATP binding and hydrolysis by the ATP-binding domains. The ion channel is also permeable to HCO(3)(-); selectivity depends on the extracellular chloride concentration. Exerts its function also by modulating the activity of other ion channels and transporters. Contributes to the regulation of the pH and the ion content of the epithelial fluid layer. Modulates the activity of the epithelial sodium channel (ENaC) complex, in part by regulating the cell surface expression of the ENaC complex. May regulate bicarbonate secretion and salvage in epithelial cells by regulating the transporter SLC4A7. Can inhibit the chloride channel activity of ANO1. Plays a role in the chloride and bicarbonate homeostasis during sperm epididymal maturation and capacitation. This chain is Cystic fibrosis transmembrane conductance regulator, found in Sus scrofa (Pig).